The following is a 658-amino-acid chain: Vertnin (658 aa).

Belongs to the vertnin family.

The protein localises to the nucleus. Acts as a transcription factor that regulates development of thoracic vertebrae. The chain is Vertnin (VRTN) from Bos taurus (Bovine).